The sequence spans 1360 residues: Spike glycoprotein (1360 aa).

The signal sequence occupies residues 1–13 (MLFVFLTLLPSCL). Over 14–1301 (GYIGDFRCIN…GTYEMYVKWP (1288 aa)) the chain is Extracellular. One can recognise a BetaCoV S1-NTD domain in the interval 15 to 296 (YIGDFRCINL…SYTSEIKCKT (282 aa)). 5 cysteine pairs are disulfide-bonded: Cys21–Cys158, Cys153–Cys187, Cys165–Cys246, Cys284–Cys294, and Cys329–Cys354. 2 N-linked (GlcNAc...) asparagine; by host glycosylation sites follow: Asn60 and Asn134. Residue Asn192 is glycosylated (N-linked (GlcNAc...) asparagine; by host). Positions 327–605 (PDCKIEEWLA…GINSGTTCST (279 aa)) constitute a BetaCoV S1-CTD domain. An N-linked (GlcNAc...) asparagine; by host glycan is attached at Asn357. 2 cysteine pairs are disulfide-bonded: Cys372/Cys425 and Cys384/Cys603. 8 N-linked (GlcNAc...) asparagine; by host glycosylation sites follow: Asn435, Asn566, Asn664, Asn704, Asn727, Asn747, Asn776, and Asn793. Fusion peptide regions lie at residues 906–927 (SAIE…VESY) and 925–945 (ESYN…VQSF). Asn929 carries N-linked (GlcNAc...) asparagine; by host glycosylation. A disulfide bridge links Cys930 with Cys941. The heptad repeat 1 stretch occupies residues 1006-1056 (QKMIASSFNNAIGAIQEGFDATNSALAKIQSVVNANAEALNNLLNQLSNRF). The stretch at 1035–1079 (QSVVNANAEALNNLLNQLSNRFGAISASLQEILSRLDALEAQAQI) forms a coiled coil. N-linked (GlcNAc...) asparagine; by host glycosylation is found at Asn1216, Asn1226, Asn1245, Asn1261, and Asn1282. Residues 1250–1290 (VPDLSFDIGKLNVTFLDLSYEMNRIQDAIKNLNESYINLKE) are heptad repeat 2. A coiled-coil region spans residues 1263–1291 (TFLDLSYEMNRIQDAIKNLNESYINLKEI). The chain crosses the membrane as a helical span at residues 1302 to 1322 (WYVWLLIGLAGVAVCVLLFFI). Residues 1323–1360 (CCCTGCGSCCFKKCGNCCDEYGGRQAGIVIHNISSHED) are Cytoplasmic-facing. The short motif at 1356–1360 (SSHED) is the KxHxx element.

The protein belongs to the betacoronaviruses spike protein family. In terms of assembly, homotrimer; each monomer consists of a S1 and a S2 subunit. The resulting peplomers protrude from the virus surface as spikes. Post-translationally, specific enzymatic cleavages in vivo yield mature proteins. The precursor is processed into S1 and S2 by host cell furin or another cellular protease to yield the mature S1 and S2 proteins. Additionally, a second cleavage leads to the release of a fusion peptide after viral attachment to host cell receptor. In terms of processing, the cytoplasmic Cys-rich domain is palmitoylated. Spike glycoprotein is digested within host endosomes.

It localises to the virion membrane. Its subcellular location is the host endoplasmic reticulum-Golgi intermediate compartment membrane. The protein localises to the host cell membrane. In terms of biological role, attaches the virion to the cell membrane by interacting with host receptor, initiating the infection. Mediates fusion of the virion and cellular membranes by acting as a class I viral fusion protein. Under the current model, the protein has at least three conformational states: pre-fusion native state, pre-hairpin intermediate state, and post-fusion hairpin state. During viral and target cell membrane fusion, the coiled coil regions (heptad repeats) assume a trimer-of-hairpins structure, positioning the fusion peptide in close proximity to the C-terminal region of the ectodomain. The formation of this structure appears to drive apposition and subsequent fusion of viral and target cell membranes. Its function is as follows. Acts as a viral fusion peptide which is unmasked following S2 cleavage occurring upon virus endocytosis. The sequence is that of Spike glycoprotein from Rat coronavirus (strain 681) (RCV-SDAV).